Here is a 162-residue protein sequence, read N- to C-terminus: MPKKKNKLPTEIVLTYKVKHNHDLKNLPDEFIKISQRAIDIIWENINWKEKVVKHRYKIGKKKYKYYTTTRLIPKIPKDNDFKRELRNRLLEGWEFASHYVDGAIKTAYSAIESWKSNYLNVNRKKNKPIFKRPFVRVKTTLMKYDRKNGIIRITIKPRKSI.

This is an uncharacterized protein from Methanocaldococcus jannaschii (strain ATCC 43067 / DSM 2661 / JAL-1 / JCM 10045 / NBRC 100440) (Methanococcus jannaschii).